The chain runs to 156 residues: MEYEKKYIHSSQLFVAVRPSVIQTVLGSCVAVCLYDSKMQISGMNHYLLPLWNNDGLASPKYGNIAISKLIEAMEAVGCQRRDMVAKLFGGASPNNFNAQNGMLVGEKNIQIAHHILSEQRIKIVASDLGGTRGRKISLESNSGRVMLKYVQKTEF.

It belongs to the CheD family.

The catalysed reaction is L-glutaminyl-[protein] + H2O = L-glutamyl-[protein] + NH4(+). Probably deamidates glutamine residues to glutamate on methyl-accepting chemotaxis receptors (MCPs), playing an important role in chemotaxis. In Sulfurimonas denitrificans (strain ATCC 33889 / DSM 1251) (Thiomicrospira denitrificans (strain ATCC 33889 / DSM 1251)), this protein is Probable chemoreceptor glutamine deamidase CheD.